A 372-amino-acid polypeptide reads, in one-letter code: Dual-specificity RNA methyltransferase RlmN (372 aa).

The Proton acceptor role is filled by Glu-97. The 238-residue stretch at 103 to 340 (ETDRKTLCVS…AVVRKNRGTD (238 aa)) folds into the Radical SAM core domain. Cys-110 and Cys-345 are joined by a disulfide. [4Fe-4S] cluster is bound by residues Cys-117, Cys-121, and Cys-124. Residues 172–173 (GE), Ser-204, 226–228 (SLN), and Asn-302 contribute to the S-adenosyl-L-methionine site. Cys-345 serves as the catalytic S-methylcysteine intermediate. The segment at 350-372 (AEGGPGDPRRRAAAALTGTPAAG) is disordered. Positions 362–372 (AAALTGTPAAG) are enriched in low complexity.

Belongs to the radical SAM superfamily. RlmN family. It depends on [4Fe-4S] cluster as a cofactor.

It localises to the cytoplasm. It catalyses the reaction adenosine(2503) in 23S rRNA + 2 reduced [2Fe-2S]-[ferredoxin] + 2 S-adenosyl-L-methionine = 2-methyladenosine(2503) in 23S rRNA + 5'-deoxyadenosine + L-methionine + 2 oxidized [2Fe-2S]-[ferredoxin] + S-adenosyl-L-homocysteine. The enzyme catalyses adenosine(37) in tRNA + 2 reduced [2Fe-2S]-[ferredoxin] + 2 S-adenosyl-L-methionine = 2-methyladenosine(37) in tRNA + 5'-deoxyadenosine + L-methionine + 2 oxidized [2Fe-2S]-[ferredoxin] + S-adenosyl-L-homocysteine. Its function is as follows. Specifically methylates position 2 of adenine 2503 in 23S rRNA and position 2 of adenine 37 in tRNAs. m2A2503 modification seems to play a crucial role in the proofreading step occurring at the peptidyl transferase center and thus would serve to optimize ribosomal fidelity. This chain is Dual-specificity RNA methyltransferase RlmN, found in Anaeromyxobacter dehalogenans (strain 2CP-C).